We begin with the raw amino-acid sequence, 238 residues long: Probable xyloglucan-specific endo-beta-1,4-glucanase A (238 aa).

The first 18 residues, 1–18 (MKLSLSVALSLAAATAQA), serve as a signal peptide directing secretion. 2 N-linked (GlcNAc...) asparagine glycosylation sites follow: asparagine 106 and asparagine 171.

It belongs to the glycosyl hydrolase 12 (cellulase H) family.

The protein localises to the secreted. It carries out the reaction xyloglucan + H2O = xyloglucan oligosaccharides.. In terms of biological role, catalyzes endohydrolysis of 1,4-beta-D-glucosidic linkages in xyloglucan with retention of the beta-configuration of the glycosyl residues. Specific for xyloglucan and does not hydrolyze other cell wall components. The polypeptide is Probable xyloglucan-specific endo-beta-1,4-glucanase A (xgeA) (Aspergillus fumigatus (strain CBS 144.89 / FGSC A1163 / CEA10) (Neosartorya fumigata)).